The following is a 116-amino-acid chain: Flagellar transcriptional regulator FlhD (116 aa).

Belongs to the FlhD family. As to quaternary structure, homodimer; disulfide-linked. Forms a heterohexamer composed of two FlhC and four FlhD subunits. Each FlhC binds a FlhD dimer, forming a heterotrimer, and a hexamer assembles by dimerization of two heterotrimers.

It is found in the cytoplasm. Functions in complex with FlhC as a master transcriptional regulator that regulates transcription of several flagellar and non-flagellar operons by binding to their promoter region. Activates expression of class 2 flagellar genes, including fliA, which is a flagellum-specific sigma factor that turns on the class 3 genes. Also regulates genes whose products function in a variety of physiological pathways. In Pantoea ananatis (strain LMG 20103), this protein is Flagellar transcriptional regulator FlhD.